A 314-amino-acid chain; its full sequence is Ribosomal RNA small subunit methyltransferase H (314 aa).

S-adenosyl-L-methionine contacts are provided by residues 35–37 (GGH), Asp-54, Phe-83, Asp-104, and Gln-111.

Belongs to the methyltransferase superfamily. RsmH family.

The protein localises to the cytoplasm. It carries out the reaction cytidine(1402) in 16S rRNA + S-adenosyl-L-methionine = N(4)-methylcytidine(1402) in 16S rRNA + S-adenosyl-L-homocysteine + H(+). Specifically methylates the N4 position of cytidine in position 1402 (C1402) of 16S rRNA. The sequence is that of Ribosomal RNA small subunit methyltransferase H from Oenococcus oeni (strain ATCC BAA-331 / PSU-1).